The primary structure comprises 166 residues: Small ribosomal subunit protein uS5 (166 aa).

One can recognise an S5 DRBM domain in the interval 11–74; sequence LIEKLITVNR…EKARRNMVTV (64 aa).

This sequence belongs to the universal ribosomal protein uS5 family. As to quaternary structure, part of the 30S ribosomal subunit. Contacts proteins S4 and S8.

Functionally, with S4 and S12 plays an important role in translational accuracy. Located at the back of the 30S subunit body where it stabilizes the conformation of the head with respect to the body. The chain is Small ribosomal subunit protein uS5 from Idiomarina loihiensis (strain ATCC BAA-735 / DSM 15497 / L2-TR).